Reading from the N-terminus, the 213-residue chain is Large ribosomal subunit protein uL3 (213 aa).

Residues 135–155 (THGSKNHRLPGSTGAGTTPGR) form a disordered region.

The protein belongs to the universal ribosomal protein uL3 family. Part of the 50S ribosomal subunit. Forms a cluster with proteins L14 and L19.

Functionally, one of the primary rRNA binding proteins, it binds directly near the 3'-end of the 23S rRNA, where it nucleates assembly of the 50S subunit. The chain is Large ribosomal subunit protein uL3 from Synechocystis sp. (strain ATCC 27184 / PCC 6803 / Kazusa).